The primary structure comprises 137 residues: Large ribosomal subunit protein uL16 (137 aa).

The segment at M1–H22 is disordered.

This sequence belongs to the universal ribosomal protein uL16 family. As to quaternary structure, part of the 50S ribosomal subunit.

Binds 23S rRNA and is also seen to make contacts with the A and possibly P site tRNAs. This chain is Large ribosomal subunit protein uL16, found in Chromohalobacter salexigens (strain ATCC BAA-138 / DSM 3043 / CIP 106854 / NCIMB 13768 / 1H11).